Here is a 344-residue protein sequence, read N- to C-terminus: Fructose-1,6-bisphosphatase class 1 (344 aa).

The Mg(2+) site is built by E92, D115, L117, and D118. Substrate contacts are provided by residues D118–S121, N211, Y244, and K274. Residue E280 coordinates Mg(2+).

This sequence belongs to the FBPase class 1 family. In terms of assembly, homotetramer. It depends on Mg(2+) as a cofactor.

Its subcellular location is the cytoplasm. The catalysed reaction is beta-D-fructose 1,6-bisphosphate + H2O = beta-D-fructose 6-phosphate + phosphate. The protein operates within carbohydrate biosynthesis; gluconeogenesis. This Aeromonas salmonicida (strain A449) protein is Fructose-1,6-bisphosphatase class 1.